Reading from the N-terminus, the 892-residue chain is Histone deacetylase 4 (892 aa).

Residues 145-225 form a disordered region; the sequence is NGNLSNLSVP…MSNVNGHDNS (81 aa). Polar residues-rich tracts occupy residues 171-192 and 208-222; these read SAPTSSRKSDLPRTNSTTISQL and ESNSQSNLMSNVNGH. Residues 481–822 are histone deacetylase; that stretch reads STGLGYDPLM…VQALIGESDD (342 aa). The active site involves His628.

Belongs to the histone deacetylase family. HD type 2 subfamily.

It localises to the nucleus. It carries out the reaction N(6)-acetyl-L-lysyl-[histone] + H2O = L-lysyl-[histone] + acetate. In terms of biological role, responsible for the deacetylation of lysine residues on the N-terminal part of the core histones (H2A, H2B, H3 and H4). Histone deacetylation gives a tag for epigenetic repression and plays an important role in transcriptional regulation, cell cycle progression and developmental events. Histone deacetylases act via the formation of large multiprotein complexes. This chain is Histone deacetylase 4 (hda-4), found in Caenorhabditis briggsae.